Consider the following 436-residue polypeptide: MKILVVGTGAREHAICSALADEATIYSVMGNRNPGISRLAGNSLLLLKLTPKVVRFASEKGVDMAFIGPEAHLEAGLVDALEEAGIPSVGPTRDAARIETDKSFMRKLFEDYRIPGSITYRVFSDPEELREFMEDFDSEAVVKPVGLTGGKGVKIVGEHLRDNMEALKYATEVIEKRIGGHPSVVIEERVVGEEFTVQAFSDGEHIVPMPAVQDHPHAYEGDQGPITGGMGSYSDSDGLLPFLTQKDYEDAVEIMQRTVDAIRKETGPYRGILYGQFMLSADGPKLIEYNARFGDPEAMNVLPLLESSMLEICEGIVDGNLKSASFMNLATVCKYLVPEGYPESGVAGAEIKVDEKKIEDMGVITYYAAVNQEDDHIYTSSSRALALVAPADDIYSAEELCEEATAHVKGRLYHRRDIGTRELVEKRIKHMEDLRS.

The region spanning 106–318 (RKLFEDYRIP…MLEICEGIVD (213 aa)) is the ATP-grasp domain. An ATP-binding site is contributed by 133 to 196 (MEDFDSEAVV…EERVVGEEFT (64 aa)). Mg(2+)-binding residues include Gln276, Glu288, and Asn290. Gln276, Glu288, and Asn290 together coordinate Mn(2+).

The protein belongs to the GARS family. Mg(2+) is required as a cofactor. The cofactor is Mn(2+).

The catalysed reaction is 5-phospho-beta-D-ribosylamine + glycine + ATP = N(1)-(5-phospho-beta-D-ribosyl)glycinamide + ADP + phosphate + H(+). It functions in the pathway purine metabolism; IMP biosynthesis via de novo pathway; N(1)-(5-phospho-D-ribosyl)glycinamide from 5-phospho-alpha-D-ribose 1-diphosphate: step 2/2. The sequence is that of Phosphoribosylamine--glycine ligase from Methanothermobacter thermautotrophicus (strain ATCC 29096 / DSM 1053 / JCM 10044 / NBRC 100330 / Delta H) (Methanobacterium thermoautotrophicum).